The chain runs to 613 residues: Coiled-coil domain-containing protein 116 (613 aa).

The interval 41 to 68 (KPGRVPHPPSTCGSSALQGQRRNKRHPQ) is disordered. The span at 51-60 (TCGSSALQGQ) shows a compositional bias: polar residues. Residues 79–104 (ESQVLDSLETVVEKATERMAAMKTEA) are a coiled coil. 3 disordered regions span residues 329–395 (CRDG…AQVA), 509–541 (RQAS…QATE), and 565–613 (MSAC…EDGV). Ser-386 is modified (phosphoserine). A compositionally biased stretch (polar residues) spans 512–539 (SRLSTSHCSTETPSVQQEPATHTAQDQA). A compositionally biased stretch (basic and acidic residues) spans 577–589 (KSKDMDNEGRDKA). Residues 590–613 (EIEDEDEDEFKDEDQDEDKDEDGV) show a composition bias toward acidic residues.

It is found in the cytoplasm. The protein localises to the cytoskeleton. The protein resides in the microtubule organizing center. It localises to the centrosome. This Homo sapiens (Human) protein is Coiled-coil domain-containing protein 116 (CCDC116).